A 2243-amino-acid polypeptide reads, in one-letter code: Zinc finger FYVE domain-containing protein 26 homolog (2243 aa).

Disordered regions lie at residues serine 386 to alanine 416 and lysine 514 to serine 556. Acidic residues predominate over residues glycine 393–valine 408. Tyrosine 403 bears the Phosphotyrosine mark. Residues alanine 517–asparagine 528 are compositionally biased toward basic and acidic residues. Residues asparagine 534–arginine 543 show a composition bias toward basic residues. The LRR 1 repeat unit spans residues lysine 617 to lysine 644. The residue at position 1424 (serine 1424) is a Phosphoserine. Residues aspartate 1444 to cysteine 1500 form an FYVE-type zinc finger. Positions 1450, 1453, 1467, 1470, 1475, 1478, 1497, and 1500 each coordinate Zn(2+). A disordered region spans residues threonine 1505–serine 1534. The segment covering aspartate 1512–serine 1534 has biased composition (polar residues). The LRR 2 repeat unit spans residues tyrosine 1887–alanine 1912.

It belongs to the ZFYVE26 family.

Phosphatidylinositol 3-phosphate (PtdIns[3]P)-binding protein. Involved in autophagy. The protein is Zinc finger FYVE domain-containing protein 26 homolog of Drosophila melanogaster (Fruit fly).